Here is a 98-residue protein sequence, read N- to C-terminus: DNA-binding protein Fis (98 aa).

The segment at residues 74–93 is a DNA-binding region (H-T-H motif); it reads QTRAATMMGINRGTLRKKLK.

It belongs to the transcriptional regulatory Fis family. As to quaternary structure, homodimer.

Activates ribosomal RNA transcription. Plays a direct role in upstream activation of rRNA promoters. The polypeptide is DNA-binding protein Fis (Vibrio atlanticus (strain LGP32) (Vibrio splendidus (strain Mel32))).